Here is a 200-residue protein sequence, read N- to C-terminus: GTP cyclohydrolase-2 (200 aa).

Arg-52–Glu-56 lines the GTP pocket. Residues Cys-57, Cys-68, and Cys-70 each coordinate Zn(2+). GTP is bound by residues Gln-73, Glu-94–Arg-96, and Thr-116. Asp-128 acts as the Proton acceptor in catalysis. The active-site Nucleophile is Arg-130. The GTP site is built by Thr-151 and Lys-156.

This sequence belongs to the GTP cyclohydrolase II family. Requires Zn(2+) as cofactor.

The catalysed reaction is GTP + 4 H2O = 2,5-diamino-6-hydroxy-4-(5-phosphoribosylamino)-pyrimidine + formate + 2 phosphate + 3 H(+). The protein operates within cofactor biosynthesis; riboflavin biosynthesis; 5-amino-6-(D-ribitylamino)uracil from GTP: step 1/4. In terms of biological role, catalyzes the conversion of GTP to 2,5-diamino-6-ribosylamino-4(3H)-pyrimidinone 5'-phosphate (DARP), formate and pyrophosphate. The protein is GTP cyclohydrolase-2 of Psychromonas ingrahamii (strain DSM 17664 / CCUG 51855 / 37).